Reading from the N-terminus, the 868-residue chain is Translation initiation factor IF-2 (868 aa).

Positions 201 to 269 are disordered; it reads KEEVKPEKVS…GTEKSDKYRE (69 aa). The segment covering 249–260 has biased composition (basic residues); sequence RGGRSKFKKKKG. Positions 368-537 constitute a tr-type G domain; that stretch reads GRAPVVTIMG…LLQSEVLELK (170 aa). A G1 region spans residues 377-384; it reads GHVDHGKT. 377–384 contacts GTP; sequence GHVDHGKT. Residues 402 to 406 form a G2 region; sequence GITQH. The G3 stretch occupies residues 423 to 426; it reads DTPG. GTP-binding positions include 423-427 and 477-480; these read DTPGH and NKMD. Residues 477–480 are G4; sequence NKMD. The interval 513–515 is G5; it reads SAK.

The protein belongs to the TRAFAC class translation factor GTPase superfamily. Classic translation factor GTPase family. IF-2 subfamily.

The protein resides in the cytoplasm. Functionally, one of the essential components for the initiation of protein synthesis. Protects formylmethionyl-tRNA from spontaneous hydrolysis and promotes its binding to the 30S ribosomal subunits. Also involved in the hydrolysis of GTP during the formation of the 70S ribosomal complex. The protein is Translation initiation factor IF-2 of Legionella pneumophila (strain Corby).